A 113-amino-acid polypeptide reads, in one-letter code: Hydrogenase maturation factor HybF (113 aa).

Positions 2 and 3 each coordinate Ni(2+). Zn(2+)-binding residues include Cys-73, Cys-76, Cys-89, and Cys-92.

The protein belongs to the HypA/HybF family. HybF subfamily.

In terms of biological role, involved in the maturation of [NiFe] hydrogenases. Required for nickel insertion into the metal center of the hydrogenase. The sequence is that of Hydrogenase maturation factor HybF from Morganella morganii (Proteus morganii).